Reading from the N-terminus, the 624-residue chain is Actin-related protein 8 (624 aa).

Met1 is subject to N-acetylmethionine. Positions 1–25 (MTQAEKGDTENGKEKGGEKEKEQRG) are enriched in basic and acidic residues. The interval 1-29 (MTQAEKGDTENGKEKGGEKEKEQRGVKRP) is disordered. Residues Ser55 and Thr56 each coordinate ATP. Ser132 carries the phosphoserine modification. Position 283 to 286 (283 to 286 (DVGD)) interacts with ATP. A Phosphoserine modification is found at Ser412. Positions 430–462 (SKQEQSAKATADRKSASKPIGFEGDLRGQSSDL) are disordered.

It belongs to the actin family. ARP8 subfamily. As to quaternary structure, component of the chromatin remodeling INO80 complex; specifically part of a complex module associated with the DBINO domain of INO80. Interacts with ACTR5; the interaction is observed in asynchronous (interphase) cells but not in metaphase-arrested cells indicative for a possible dissociation of the INO80 complex in mitotic cells. Exists as monomers and dimers, but the dimer is most probably the biologically relevant form required for stable interactions with histones that exploits the twofold symmetry of the nucleosome core.

It is found in the nucleus. The protein resides in the chromosome. Functionally, plays an important role in the functional organization of mitotic chromosomes. Exhibits low basal ATPase activity, and unable to polymerize. Its function is as follows. Proposed core component of the chromatin remodeling INO80 complex which is involved in transcriptional regulation, DNA replication and probably DNA repair. Required for the recruitment of INO80 (and probably the INO80 complex) to sites of DNA damage. Strongly prefer nucleosomes and H3-H4 tetramers over H2A-H2B dimers, suggesting it may act as a nucleosome recognition module within the complex. This chain is Actin-related protein 8 (ACTR8), found in Homo sapiens (Human).